We begin with the raw amino-acid sequence, 529 residues long: V-set and immunoglobulin domain-containing protein 10 (529 aa).

An N-terminal signal peptide occupies residues 1–18; it reads MMITSAVVLYLLLLSHQT. Ig-like C2-type domains follow at residues 19–110 and 129–217; these read VSEE…QTLS and PATF…QELL. Over 21 to 411 the chain is Extracellular; it reads EEQVQQFVIG…LNVKTSAGNG (391 aa). N-linked (GlcNAc...) asparagine glycosylation is found at Asn-34, Asn-35, Asn-46, Asn-135, Asn-147, Asn-159, Asn-211, Asn-269, Asn-280, Asn-284, Asn-330, Asn-357, and Asn-376. An intrachain disulfide couples Cys-40 to Cys-96. Cys-150 and Cys-199 are disulfide-bonded. An Ig-like C2-type 3 domain is found at 317-403; sequence PTGQPLATAL…GARELEVYLN (87 aa). Cys-335 and Cys-387 are joined by a disulfide. The chain crosses the membrane as a helical span at residues 412–432; sequence GAIVGIFVSVLVMMIGIVVGV. At 433 to 529 the chain is on the cytoplasmic side; that stretch reads TVYTKRDRIC…PQRAELQPAV (97 aa).

The protein resides in the membrane. The chain is V-set and immunoglobulin domain-containing protein 10 (vsig10) from Danio rerio (Zebrafish).